Consider the following 281-residue polypeptide: Ribosomal RNA small subunit methyltransferase A (281 aa).

Residues N36, L38, G63, E84, D109, and N127 each coordinate S-adenosyl-L-methionine.

The protein belongs to the class I-like SAM-binding methyltransferase superfamily. rRNA adenine N(6)-methyltransferase family. RsmA subfamily.

It localises to the cytoplasm. It catalyses the reaction adenosine(1518)/adenosine(1519) in 16S rRNA + 4 S-adenosyl-L-methionine = N(6)-dimethyladenosine(1518)/N(6)-dimethyladenosine(1519) in 16S rRNA + 4 S-adenosyl-L-homocysteine + 4 H(+). In terms of biological role, specifically dimethylates two adjacent adenosines (A1518 and A1519) in the loop of a conserved hairpin near the 3'-end of 16S rRNA in the 30S particle. May play a critical role in biogenesis of 30S subunits. The protein is Ribosomal RNA small subunit methyltransferase A of Borrelia garinii subsp. bavariensis (strain ATCC BAA-2496 / DSM 23469 / PBi) (Borreliella bavariensis).